We begin with the raw amino-acid sequence, 141 residues long: Hemoglobin subunit alpha-1/2 (141 aa).

A Globin domain is found at 1–141 (VLSPADKTNV…VSTVLTSKYR (141 aa)). Phosphoserine is present on Ser-3. Lys-7 carries the post-translational modification N6-succinyllysine. At Thr-8 the chain carries Phosphothreonine. The residue at position 11 (Lys-11) is an N6-succinyllysine. Lys-16 is subject to N6-acetyllysine; alternate. Residue Lys-16 is modified to N6-succinyllysine; alternate. Tyr-24 is modified (phosphotyrosine). Ser-35 bears the Phosphoserine mark. Lys-40 bears the N6-succinyllysine mark. Ser-49 carries the post-translational modification Phosphoserine. His-58 provides a ligand contact to O2. Position 87 (His-87) interacts with heme b. Phosphoserine is present on Ser-102. Thr-108 carries the post-translational modification Phosphothreonine. Ser-124 is modified (phosphoserine). 2 positions are modified to phosphothreonine: Thr-134 and Thr-137. The residue at position 138 (Ser-138) is a Phosphoserine.

The protein belongs to the globin family. As to quaternary structure, heterotetramer of two alpha chains and two beta chains. Red blood cells.

Its function is as follows. Involved in oxygen transport from the lung to the various peripheral tissues. The chain is Hemoglobin subunit alpha-1/2 from Mustela putorius (European polecat).